We begin with the raw amino-acid sequence, 278 residues long: 4-deoxy-L-threo-5-hexosulose-uronate ketol-isomerase (278 aa).

Zn(2+)-binding residues include His-196, His-198, Glu-203, and His-245.

The protein belongs to the KduI family. Zn(2+) serves as cofactor.

It carries out the reaction 5-dehydro-4-deoxy-D-glucuronate = 3-deoxy-D-glycero-2,5-hexodiulosonate. It functions in the pathway glycan metabolism; pectin degradation; 2-dehydro-3-deoxy-D-gluconate from pectin: step 4/5. Its function is as follows. Catalyzes the isomerization of 5-dehydro-4-deoxy-D-glucuronate to 3-deoxy-D-glycero-2,5-hexodiulosonate. The polypeptide is 4-deoxy-L-threo-5-hexosulose-uronate ketol-isomerase (Pectobacterium carotovorum subsp. carotovorum (Erwinia carotovora subsp. carotovora)).